The chain runs to 152 residues: Deoxyuridine 5'-triphosphate nucleotidohydrolase (152 aa).

Residues 71 to 73 (RSG), Asn84, 88 to 90 (LID), and Met98 each bind substrate.

The protein belongs to the dUTPase family. Homotrimer. The cofactor is Mg(2+).

The catalysed reaction is dUTP + H2O = dUMP + diphosphate + H(+). It functions in the pathway pyrimidine metabolism; dUMP biosynthesis; dUMP from dCTP (dUTP route): step 2/2. Its function is as follows. This enzyme is involved in nucleotide metabolism: it produces dUMP, the immediate precursor of thymidine nucleotides and it decreases the intracellular concentration of dUTP so that uracil cannot be incorporated into DNA. The polypeptide is Deoxyuridine 5'-triphosphate nucleotidohydrolase (Escherichia coli O157:H7).